A 471-amino-acid polypeptide reads, in one-letter code: Glutamate--tRNA ligase (471 aa).

Residues 9-19 carry the 'HIGH' region motif; sequence PSPTGYLHVGG. Zn(2+) contacts are provided by cysteine 98, cysteine 100, cysteine 125, and aspartate 127. Residues 237-241 carry the 'KMSKS' region motif; that stretch reads KLSKR. Lysine 240 is an ATP binding site.

The protein belongs to the class-I aminoacyl-tRNA synthetase family. Glutamate--tRNA ligase type 1 subfamily. As to quaternary structure, monomer. Zn(2+) serves as cofactor.

The protein localises to the cytoplasm. It carries out the reaction tRNA(Glu) + L-glutamate + ATP = L-glutamyl-tRNA(Glu) + AMP + diphosphate. Functionally, catalyzes the attachment of glutamate to tRNA(Glu) in a two-step reaction: glutamate is first activated by ATP to form Glu-AMP and then transferred to the acceptor end of tRNA(Glu). In Yersinia enterocolitica serotype O:8 / biotype 1B (strain NCTC 13174 / 8081), this protein is Glutamate--tRNA ligase.